Here is a 700-residue protein sequence, read N- to C-terminus: Calpain-2 catalytic subunit (700 aa).

A2 carries the post-translational modification N-acetylalanine. The propeptide at 2-19 (AGIAAKLAKDREAAEGLG) is anchors to the small subunit. In terms of domain architecture, Calpain catalytic spans 45–344 (LFQDPSFPAI…YSRLEICNLT (300 aa)). Positions 89, 91, and 96 each coordinate Ca(2+). C105 is an active-site residue. 3 residues coordinate Ca(2+): E175, Q229, and K230. Active-site residues include H262 and N286. Ca(2+)-binding residues include E292, D299, and E323. Residues 345–514 (PDTLTSDTYK…KKADYQAVDD (170 aa)) form a domain III region. Residues 515–529 (EIEANLEEFDISEDD) form a linker region. The interval 530–700 (IDDGFRRLFA…LISWLCFSVL (171 aa)) is domain IV. Positions 542, 545, 547, 552, 585, 587, 589, 591, 596, 615, 617, 619, 621, 626, 658, and 661 each coordinate Ca(2+). EF-hand domains are found at residues 572–605 (FSIE…TKIQ) and 602–637 (TKIQ…AGFK). An EF-hand 3 domain is found at 667–700 (VRLETLFKIFKQLDPENTGTIELDLISWLCFSVL).

It belongs to the peptidase C2 family. Forms a heterodimer with a small (regulatory) subunit (CAPNS1). Interacts with CPEB3; this leads to cleavage of CPEB3. Interacts with PIDD1 alternative open reading frame protein altPIDD1. Requires Ca(2+) as cofactor. In terms of tissue distribution, ubiquitous.

The protein resides in the cytoplasm. It localises to the cell membrane. It carries out the reaction Broad endopeptidase specificity.. With respect to regulation, activated by 200-1000 micromolar concentrations of calcium and inhibited by calpastatin. Calcium-regulated non-lysosomal thiol-protease which catalyzes limited proteolysis of substrates involved in cytoskeletal remodeling and signal transduction. Proteolytically cleaves MYOC at 'Arg-226'. Proteolytically cleaves CPEB3 following neuronal stimulation which abolishes CPEB3 translational repressor activity, leading to translation of CPEB3 target mRNAs. This Homo sapiens (Human) protein is Calpain-2 catalytic subunit (CAPN2).